Here is a 213-residue protein sequence, read N- to C-terminus: Protein DMP4 (213 aa).

Transmembrane regions (helical) follow at residues 51 to 71 (LANLLPTGTVLAFQLLSPIFS), 78 to 98 (LVSKIMTSTLVAICGFSCFIL), 142 to 162 (FIDFVHAFMSLFVFGAVVLFD), and 180 to 200 (VLTALPVGVGVFSSMLFATFP).

Belongs to the plant DMP1 protein family. Expressed in leaves, flowers and siliques, especially in vascular tissues.

It is found in the vacuole membrane. In terms of biological role, involved in membrane remodeling. In Arabidopsis thaliana (Mouse-ear cress), this protein is Protein DMP4.